The sequence spans 132 residues: Large ribosomal subunit protein bL17 (132 aa).

The protein belongs to the bacterial ribosomal protein bL17 family. As to quaternary structure, part of the 50S ribosomal subunit. Contacts protein L32.

This is Large ribosomal subunit protein bL17 from Saccharophagus degradans (strain 2-40 / ATCC 43961 / DSM 17024).